The primary structure comprises 174 residues: NADH-ubiquinone oxidoreductase chain 6 (174 aa).

Transmembrane regions (helical) follow at residues 1-21, 24-44, 47-67, 86-106, 111-131, and 151-171; these read MTYA…GFSS, SPIY…AVIL, GGGY…MVVF, VEVL…VLWV, GVVV…EGEG, and WLVV…IEIA.

The protein belongs to the complex I subunit 6 family. Core subunit of respiratory chain NADH dehydrogenase (Complex I) which is composed of 45 different subunits.

The protein localises to the mitochondrion inner membrane. The enzyme catalyses a ubiquinone + NADH + 5 H(+)(in) = a ubiquinol + NAD(+) + 4 H(+)(out). Core subunit of the mitochondrial membrane respiratory chain NADH dehydrogenase (Complex I) which catalyzes electron transfer from NADH through the respiratory chain, using ubiquinone as an electron acceptor. Essential for the catalytic activity and assembly of complex I. This chain is NADH-ubiquinone oxidoreductase chain 6 (MT-ND6), found in Pongo abelii (Sumatran orangutan).